A 289-amino-acid chain; its full sequence is Aquaporin PIP1-2 (289 aa).

The tract at residues 1-36 (MEGKEEDVRLGANKFSERQPIGTAAQGAADDKDYKE) is disordered. 2 helical membrane passes run 58–78 (IAEFVATFLFLYITILTVMGV) and 93–115 (IAWSFGGMIFALVYCTAGISGGH). The NPA 1 signature appears at 117–119 (NPA). 3 helical membrane passes run 136-156 (LFYIIMQCLGAVCGAGVVKGF), 178-198 (GDGLGAEIVGTFILVYTVFSA), and 212-232 (ILAPLPIGFAVFLVHLATIPI). An NPA 2 motif is present at residues 238–240 (NPA). The chain crosses the membrane as a helical span at residues 260–280 (IFWVGPFIGAALAAIYHQVII).

It belongs to the MIP/aquaporin (TC 1.A.8) family. PIP (TC 1.A.8.11) subfamily. Interacts with PIP2-1 to form heteromers. Highly expressed in developing tassels and at lower levels in roots, shoots, ears and embryos. Expressed in the root growing zone at 5-6 mm from the root tip. Expressed in xylem parenchyma.

Its subcellular location is the cell membrane. Functionally, water channel required to facilitate the transport of water across cell membrane. Active as heteromers with PIP1-1, PIP2-1, PIP2-4 or PIP2-5, but not as homomers. The polypeptide is Aquaporin PIP1-2 (PIP1-2) (Zea mays (Maize)).